We begin with the raw amino-acid sequence, 972 residues long: Isoleucine--tRNA ligase (972 aa).

Residues 63–73 (PYANGNIHIGH) carry the 'HIGH' region motif. Glu-603 serves as a coordination point for L-isoleucyl-5'-AMP. Positions 644–648 (KMSKS) match the 'KMSKS' region motif. An ATP-binding site is contributed by Lys-647.

Belongs to the class-I aminoacyl-tRNA synthetase family. IleS type 1 subfamily. In terms of assembly, monomer.

The protein resides in the cytoplasm. The enzyme catalyses tRNA(Ile) + L-isoleucine + ATP = L-isoleucyl-tRNA(Ile) + AMP + diphosphate. Functionally, catalyzes the attachment of isoleucine to tRNA(Ile). As IleRS can inadvertently accommodate and process structurally similar amino acids such as valine, to avoid such errors it has two additional distinct tRNA(Ile)-dependent editing activities. One activity is designated as 'pretransfer' editing and involves the hydrolysis of activated Val-AMP. The other activity is designated 'posttransfer' editing and involves deacylation of mischarged Val-tRNA(Ile). The protein is Isoleucine--tRNA ligase of Brucella melitensis biotype 1 (strain ATCC 23456 / CCUG 17765 / NCTC 10094 / 16M).